Consider the following 227-residue polypeptide: UPF0758 protein llmg_1515 (227 aa).

Positions 103–225 constitute an MPN domain; the sequence is QVLSSKEYGM…YYSFRERDSN (123 aa). 3 residues coordinate Zn(2+): H174, H176, and D187. The JAMM motif motif lies at 174–187; that stretch reads HNHPSGNLQPSQAD.

This sequence belongs to the UPF0758 family.

The sequence is that of UPF0758 protein llmg_1515 from Lactococcus lactis subsp. cremoris (strain MG1363).